Here is a 193-residue protein sequence, read N- to C-terminus: Threonylcarbamoyl-AMP synthase (193 aa).

The region spanning 14 to 193 is the YrdC-like domain; the sequence is SRLQQRARKQ…IDLESGRVLR (180 aa).

This sequence belongs to the SUA5 family. TsaC subfamily.

Its subcellular location is the cytoplasm. It catalyses the reaction L-threonine + hydrogencarbonate + ATP = L-threonylcarbamoyladenylate + diphosphate + H2O. Required for the formation of a threonylcarbamoyl group on adenosine at position 37 (t(6)A37) in tRNAs that read codons beginning with adenine. Catalyzes the conversion of L-threonine, HCO(3)(-)/CO(2) and ATP to give threonylcarbamoyl-AMP (TC-AMP) as the acyladenylate intermediate, with the release of diphosphate. The chain is Threonylcarbamoyl-AMP synthase from Chromobacterium violaceum (strain ATCC 12472 / DSM 30191 / JCM 1249 / CCUG 213 / NBRC 12614 / NCIMB 9131 / NCTC 9757 / MK).